The sequence spans 357 residues: Zinc finger protein 830 (357 aa).

A C2H2-type zinc finger spans residues 47–69 (CVVCNIQIKSELLWPAHILGKQH). 3 disordered regions span residues 98–126 (RKGS…TKLP), 157–194 (DDDE…ADRL), and 231–255 (ALPE…PKDQ). The segment covering 99-115 (KGSEPENQESKRIKGTE) has biased composition (basic and acidic residues). Over residues 157–168 (DDDEVEGEEYEN) the composition is skewed to acidic residues. Residues 242–255 (ADAKVRKVDAPKDQ) are compositionally biased toward basic and acidic residues. Residues 279 to 325 (AEEDEEGRLDRQIDEIDEQIECYRRVEHLRDLKDTLQDAKMEVLKSK) adopt a coiled-coil conformation.

Its subcellular location is the nucleus. The protein localises to the chromosome. It is found in the nucleus speckle. Its function is as follows. May act as an important regulator of the cell cycle that participates in the maintenance of genome integrity. The chain is Zinc finger protein 830 from Xenopus tropicalis (Western clawed frog).